Consider the following 897-residue polypeptide: Zinc finger protein zas1 (897 aa).

2 C2H2-type zinc fingers span residues Phe26 to His50 and Phe56 to His79. The segment at Ala93 to His119 adopts a C2H2-type 3; atypical zinc-finger fold.

The protein resides in the nucleus. In Schizosaccharomyces pombe (strain 972 / ATCC 24843) (Fission yeast), this protein is Zinc finger protein zas1 (zas1).